A 600-amino-acid chain; its full sequence is MKNQLRSSFSTQGRRMAGARALWVANGMKKEMMGKPIIAIVNSFTQFVPGHTHLHEIGQQVKAEIEKLGCFAAEFNTIAIDDGIAMGHDGMLYSLPSRDIIADSVEYMVNAHKADAMVCISNCDKITPGMLMAAMRLNIPTVFVSGGPMEAGEWNNQHLDLIDAMIKSADASVSDEDVAQIEDNACPGCGCCSGMFTANSMNCLNEAIGLGLPGNGTILATHANRTQLFKDAAALIVKNAYKYYEEGDDSVLPRSIATRDAFLNAMTLDIAMGGSTNTVLHLLAIAHEAEVDFKMDDIDMLSRHVPCLCKVAPNTQKYHIQDVNRAGGILNILGELSKGGLLKTDVKRVDGLTLAEAVEKYNICKKEVDTEAKRIYSSAPGNKFNIKLGSQNAVYKELDTDRANGCIRDLQHAYSKDGGLAVLKGNIAQDGCVVKTAGVDESIWKFSGPAKVFDSQDAACEGILGGKVVSGDVVVITHEGPKGGPGMQEMLYPTSYIKSKHLGKECALITDGRFSGGTSGLSIGHISPEAAAGGNIGKIVDGDIIEIDIPNRSINVKLSDEELAARPMAPVTRDRKVPKSLKAYASMVSSADKGGVRIID.

D82 contributes to the Mg(2+) binding site. Residue C123 participates in [2Fe-2S] cluster binding. Mg(2+) contacts are provided by D124 and K125. At K125 the chain carries N6-carboxylysine. A [2Fe-2S] cluster-binding site is contributed by C192. E489 lines the Mg(2+) pocket. S515 serves as the catalytic Proton acceptor.

This sequence belongs to the IlvD/Edd family. As to quaternary structure, homodimer. It depends on [2Fe-2S] cluster as a cofactor. Requires Mg(2+) as cofactor.

The catalysed reaction is (2R)-2,3-dihydroxy-3-methylbutanoate = 3-methyl-2-oxobutanoate + H2O. The enzyme catalyses (2R,3R)-2,3-dihydroxy-3-methylpentanoate = (S)-3-methyl-2-oxopentanoate + H2O. It functions in the pathway amino-acid biosynthesis; L-isoleucine biosynthesis; L-isoleucine from 2-oxobutanoate: step 3/4. Its pathway is amino-acid biosynthesis; L-valine biosynthesis; L-valine from pyruvate: step 3/4. Functionally, functions in the biosynthesis of branched-chain amino acids. Catalyzes the dehydration of (2R,3R)-2,3-dihydroxy-3-methylpentanoate (2,3-dihydroxy-3-methylvalerate) into 2-oxo-3-methylpentanoate (2-oxo-3-methylvalerate) and of (2R)-2,3-dihydroxy-3-methylbutanoate (2,3-dihydroxyisovalerate) into 2-oxo-3-methylbutanoate (2-oxoisovalerate), the penultimate precursor to L-isoleucine and L-valine, respectively. The protein is Dihydroxy-acid dehydratase of Phocaeicola vulgatus (strain ATCC 8482 / DSM 1447 / JCM 5826 / CCUG 4940 / NBRC 14291 / NCTC 11154) (Bacteroides vulgatus).